We begin with the raw amino-acid sequence, 1072 residues long: Carbamoyl phosphate synthase large chain (1072 aa).

The carboxyphosphate synthetic domain stretch occupies residues 1-401 (MPKRLDINTI…SLLKAVRSLE (401 aa)). Residues Arg-129, Arg-169, Gly-175, Gly-176, Lys-208, Ile-210, Glu-215, Gly-241, Val-242, His-243, Gln-284, and Glu-298 each contribute to the ATP site. The 195-residue stretch at 133–327 (RTLMQELNEP…IAKLAAKIAV (195 aa)) folds into the ATP-grasp 1 domain. The Mg(2+) site is built by Gln-284, Glu-298, and Asn-300. Residues Gln-284, Glu-298, and Asn-300 each contribute to the Mn(2+) site. The tract at residues 402–546 (LGVYHLELEH…YSTYGDENES (145 aa)) is oligomerization domain. Residues 547–929 (VRTDRKSVVV…ALYKGLVASG (383 aa)) form a carbamoyl phosphate synthetic domain region. The ATP-grasp 2 domain maps to 671-861 (EAALTQLGIP…MANVATKVIL (191 aa)). Positions 707, 746, 752, 777, 778, 779, 780, 820, and 832 each coordinate ATP. The Mg(2+) site is built by Gln-820, Glu-832, and Asn-834. 3 residues coordinate Mn(2+): Gln-820, Glu-832, and Asn-834. The 143-residue stretch at 930–1072 (INIPTHGSVI…QTKRHEVVHA (143 aa)) folds into the MGS-like domain. The segment at 930 to 1072 (INIPTHGSVI…QTKRHEVVHA (143 aa)) is allosteric domain.

The protein belongs to the CarB family. Composed of two chains; the small (or glutamine) chain promotes the hydrolysis of glutamine to ammonia, which is used by the large (or ammonia) chain to synthesize carbamoyl phosphate. Tetramer of heterodimers (alpha,beta)4. Mg(2+) serves as cofactor. The cofactor is Mn(2+).

It catalyses the reaction hydrogencarbonate + L-glutamine + 2 ATP + H2O = carbamoyl phosphate + L-glutamate + 2 ADP + phosphate + 2 H(+). The enzyme catalyses hydrogencarbonate + NH4(+) + 2 ATP = carbamoyl phosphate + 2 ADP + phosphate + 2 H(+). The protein operates within amino-acid biosynthesis; L-arginine biosynthesis; carbamoyl phosphate from bicarbonate: step 1/1. Its pathway is pyrimidine metabolism; UMP biosynthesis via de novo pathway; (S)-dihydroorotate from bicarbonate: step 1/3. Large subunit of the glutamine-dependent carbamoyl phosphate synthetase (CPSase). CPSase catalyzes the formation of carbamoyl phosphate from the ammonia moiety of glutamine, carbonate, and phosphate donated by ATP, constituting the first step of 2 biosynthetic pathways, one leading to arginine and/or urea and the other to pyrimidine nucleotides. The large subunit (synthetase) binds the substrates ammonia (free or transferred from glutamine from the small subunit), hydrogencarbonate and ATP and carries out an ATP-coupled ligase reaction, activating hydrogencarbonate by forming carboxy phosphate which reacts with ammonia to form carbamoyl phosphate. The sequence is that of Carbamoyl phosphate synthase large chain from Bacillus cereus (strain G9842).